A 57-amino-acid chain; its full sequence is Large ribosomal subunit protein bL32 (57 aa).

The segment covering M1–W20 has biased composition (basic residues). The tract at residues M1–K23 is disordered.

This sequence belongs to the bacterial ribosomal protein bL32 family.

The polypeptide is Large ribosomal subunit protein bL32 (Prochlorococcus marinus (strain SARG / CCMP1375 / SS120)).